A 450-amino-acid chain; its full sequence is 23S rRNA (uracil(1939)-C(5))-methyltransferase RlmD (450 aa).

In terms of domain architecture, TRAM spans 12 to 70 (SKQLSAKLSLSVNQLDHLGAGIAQHQGKVVFIPGALPDETVTVQFTEQKKNYARAKLIK). [4Fe-4S] cluster-binding residues include cysteine 83, cysteine 89, cysteine 92, and cysteine 171. Residues glutamine 283, phenylalanine 312, asparagine 317, glutamate 333, aspartate 360, and aspartate 380 each contribute to the S-adenosyl-L-methionine site. Cysteine 406 acts as the Nucleophile in catalysis.

It belongs to the class I-like SAM-binding methyltransferase superfamily. RNA M5U methyltransferase family. RlmD subfamily.

The enzyme catalyses uridine(1939) in 23S rRNA + S-adenosyl-L-methionine = 5-methyluridine(1939) in 23S rRNA + S-adenosyl-L-homocysteine + H(+). In terms of biological role, catalyzes the formation of 5-methyl-uridine at position 1939 (m5U1939) in 23S rRNA. This chain is 23S rRNA (uracil(1939)-C(5))-methyltransferase RlmD, found in Shewanella baltica (strain OS155 / ATCC BAA-1091).